The following is a 230-amino-acid chain: Phosducin-like protein 1 (230 aa).

An N-acetylmethionine modification is found at methionine 1. Positions 16–166 (AEKDKHTTVD…VVGYKNGLEK (151 aa)) constitute a Phosducin domain. Residues 25-79 (DSDDKSSGEENLDELLNELDRELDEDHEFLSAYRSERLQQISDHLKQVKKNVEDD) are a coiled coil. The tract at residues 81-230 (YGRLQCIDNE…RSESDSDLDI (150 aa)) is thioredoxin fold.

Belongs to the phosducin family. In terms of assembly, interacts with the G protein beta-gamma subunit complex (STE4-STE18 complex).

The protein localises to the cytoplasm. In terms of biological role, not essential for growth. Inhibits early G-protein signaling events following pheromone stimulation. May help create heterodimerizable beta-tubulin by facilitating the efficient transfer of nascent beta-tubulin polypeptides to the folding apparatus. The sequence is that of Phosducin-like protein 1 (PLP1) from Saccharomyces cerevisiae (strain ATCC 204508 / S288c) (Baker's yeast).